We begin with the raw amino-acid sequence, 432 residues long: Gamma-glutamyl phosphate reductase (432 aa).

Belongs to the gamma-glutamyl phosphate reductase family.

It localises to the cytoplasm. The enzyme catalyses L-glutamate 5-semialdehyde + phosphate + NADP(+) = L-glutamyl 5-phosphate + NADPH + H(+). The protein operates within amino-acid biosynthesis; L-proline biosynthesis; L-glutamate 5-semialdehyde from L-glutamate: step 2/2. In terms of biological role, catalyzes the NADPH-dependent reduction of L-glutamate 5-phosphate into L-glutamate 5-semialdehyde and phosphate. The product spontaneously undergoes cyclization to form 1-pyrroline-5-carboxylate. This is Gamma-glutamyl phosphate reductase from Ruminiclostridium cellulolyticum (strain ATCC 35319 / DSM 5812 / JCM 6584 / H10) (Clostridium cellulolyticum).